Here is a 127-residue protein sequence, read N- to C-terminus: Fluoride-specific ion channel FluC (127 aa).

The next 2 membrane-spanning stretches (helical) occupy residues 4 to 24 and 36 to 56; these read WFWI…LSTW and GTLA…EIAA. Residues Gly-75 and Thr-78 each coordinate Na(+). The helical transmembrane segment at 100-120 threads the bilayer; that stretch reads LANIAITLVVCLLAGVLGMVV.

This sequence belongs to the fluoride channel Fluc/FEX (TC 1.A.43) family.

It localises to the cell inner membrane. The catalysed reaction is fluoride(in) = fluoride(out). Its activity is regulated as follows. Na(+) is not transported, but it plays an essential structural role and its presence is essential for fluoride channel function. In terms of biological role, fluoride-specific ion channel. Important for reducing fluoride concentration in the cell, thus reducing its toxicity. In Sorangium cellulosum (strain So ce56) (Polyangium cellulosum (strain So ce56)), this protein is Fluoride-specific ion channel FluC.